The chain runs to 38 residues: Small ribosomal subunit protein eS32 (38 aa).

The protein belongs to the eukaryotic ribosomal protein eS32 family. In terms of assembly, component of the small ribosomal subunit (SSU).

This chain is Small ribosomal subunit protein eS32 (rpl41e), found in Methanocaldococcus jannaschii (strain ATCC 43067 / DSM 2661 / JAL-1 / JCM 10045 / NBRC 100440) (Methanococcus jannaschii).